A 170-amino-acid chain; its full sequence is Cytochrome b6-f complex subunit 4 (170 aa).

3 helical membrane-spanning segments follow: residues 36-56, 95-115, and 131-151; these read LLYI…GLAV, LLGV…PFLE, and TVFL…TLPI.

Belongs to the cytochrome b family. PetD subfamily. As to quaternary structure, the 4 large subunits of the cytochrome b6-f complex are cytochrome b6, subunit IV (17 kDa polypeptide, petD), cytochrome f and the Rieske protein, while the 4 small subunits are petG, petL, petM and petN. The complex functions as a dimer.

It localises to the plastid. Its subcellular location is the chloroplast thylakoid membrane. In terms of biological role, component of the cytochrome b6-f complex, which mediates electron transfer between photosystem II (PSII) and photosystem I (PSI), cyclic electron flow around PSI, and state transitions. This Nymphaea alba (White water-lily) protein is Cytochrome b6-f complex subunit 4.